The following is a 466-amino-acid chain: Glutamate decarboxylase (466 aa).

Residue Lys-277 is modified to N6-(pyridoxal phosphate)lysine.

It belongs to the group II decarboxylase family. Requires pyridoxal 5'-phosphate as cofactor.

The catalysed reaction is L-glutamate + H(+) = 4-aminobutanoate + CO2. Its function is as follows. Converts internalized glutamate to GABA and increases the internal pH. Involved in glutamate-dependent acid resistance. The chain is Glutamate decarboxylase (gadB) from Lactococcus lactis subsp. cremoris (strain MG1363).